The sequence spans 340 residues: Ketol-acid reductoisomerase (NADP(+)) (340 aa).

The 183-residue stretch at 1-183 (MAITVYYDKD…GGGRTGIIET (183 aa)) folds into the KARI N-terminal Rossmann domain. Residues 26 to 29 (FGSQ), Arg49, Ser52, Ser54, and 84 to 87 (DEIQ) contribute to the NADP(+) site. Residue His109 is part of the active site. Residue Gly135 participates in NADP(+) binding. Residues 184–329 (TFKAETETDL…RNLRAMMPWI (146 aa)) enclose the KARI C-terminal knotted domain. Positions 192, 196, 228, and 232 each coordinate Mg(2+). Residue Ser253 participates in substrate binding.

It belongs to the ketol-acid reductoisomerase family. Requires Mg(2+) as cofactor.

It carries out the reaction (2R)-2,3-dihydroxy-3-methylbutanoate + NADP(+) = (2S)-2-acetolactate + NADPH + H(+). It catalyses the reaction (2R,3R)-2,3-dihydroxy-3-methylpentanoate + NADP(+) = (S)-2-ethyl-2-hydroxy-3-oxobutanoate + NADPH + H(+). Its pathway is amino-acid biosynthesis; L-isoleucine biosynthesis; L-isoleucine from 2-oxobutanoate: step 2/4. The protein operates within amino-acid biosynthesis; L-valine biosynthesis; L-valine from pyruvate: step 2/4. Involved in the biosynthesis of branched-chain amino acids (BCAA). Catalyzes an alkyl-migration followed by a ketol-acid reduction of (S)-2-acetolactate (S2AL) to yield (R)-2,3-dihydroxy-isovalerate. In the isomerase reaction, S2AL is rearranged via a Mg-dependent methyl migration to produce 3-hydroxy-3-methyl-2-ketobutyrate (HMKB). In the reductase reaction, this 2-ketoacid undergoes a metal-dependent reduction by NADPH to yield (R)-2,3-dihydroxy-isovalerate. This is Ketol-acid reductoisomerase (NADP(+)) from Campylobacter jejuni subsp. jejuni serotype O:2 (strain ATCC 700819 / NCTC 11168).